A 291-amino-acid polypeptide reads, in one-letter code: MKDYLVKAIDKTKNLRLITVDAKDLVSEAQKRHDTWSASSAVLGRTLIGGLLLSAALLKDKDELTVRLLGNGPVGATIVTAKADLTIKGYIQNPHIALPPKKDGHIDVAKAVGKDWLEVTKDQGLKEPYTGQVPIVSGEIAEDFTYYLAKSEQIPSAVGLSVFVEPNNEIGAAGGFILQALPGATDEQLAEVEKRIKALPNLSTLFLDGMTPENLAERILGTDCKILAKEDVSFACDCSKEKYSQILATLKPAQLKEMIEKDHGAELVCRFCKEKYHFTEDELKDVLKKAN.

2 disulfide bridges follow: Cys236-Cys238 and Cys269-Cys272.

Belongs to the HSP33 family. Post-translationally, under oxidizing conditions two disulfide bonds are formed involving the reactive cysteines. Under reducing conditions zinc is bound to the reactive cysteines and the protein is inactive.

The protein localises to the cytoplasm. Redox regulated molecular chaperone. Protects both thermally unfolding and oxidatively damaged proteins from irreversible aggregation. Plays an important role in the bacterial defense system toward oxidative stress. This is 33 kDa chaperonin from Lactobacillus johnsonii (strain CNCM I-12250 / La1 / NCC 533).